The sequence spans 173 residues: Translation initiation factor IF-3 (173 aa).

This sequence belongs to the IF-3 family. Monomer.

It localises to the cytoplasm. Its function is as follows. IF-3 binds to the 30S ribosomal subunit and shifts the equilibrium between 70S ribosomes and their 50S and 30S subunits in favor of the free subunits, thus enhancing the availability of 30S subunits on which protein synthesis initiation begins. The chain is Translation initiation factor IF-3 from Parvibaculum lavamentivorans (strain DS-1 / DSM 13023 / NCIMB 13966).